The primary structure comprises 417 residues: UPF0761 membrane protein CV_0810 (417 aa).

7 consecutive transmembrane segments (helical) span residues Leu-52–Phe-72, Phe-79–Tyr-99, Leu-110–Glu-130, Met-150–Trp-170, Leu-185–Leu-205, Phe-214–Thr-234, and Ile-258–Phe-278.

It belongs to the UPF0761 family.

Its subcellular location is the cell inner membrane. This is UPF0761 membrane protein CV_0810 from Chromobacterium violaceum (strain ATCC 12472 / DSM 30191 / JCM 1249 / CCUG 213 / NBRC 12614 / NCIMB 9131 / NCTC 9757 / MK).